A 246-amino-acid chain; its full sequence is 5'-nucleotidase SurE (246 aa).

Residues Asp8, Asp9, Ser39, and Asn91 each coordinate a divalent metal cation.

It belongs to the SurE nucleotidase family. Requires a divalent metal cation as cofactor.

Its subcellular location is the cytoplasm. It catalyses the reaction a ribonucleoside 5'-phosphate + H2O = a ribonucleoside + phosphate. In terms of biological role, nucleotidase that shows phosphatase activity on nucleoside 5'-monophosphates. In Mannheimia succiniciproducens (strain KCTC 0769BP / MBEL55E), this protein is 5'-nucleotidase SurE.